The chain runs to 144 residues: UPF0735 ACT domain-containing protein NT01CX_1681 (144 aa).

The ACT domain occupies 68–143 (TIGFLLSHKA…NVVKVSLIAM (76 aa)).

This sequence belongs to the UPF0735 family.

The sequence is that of UPF0735 ACT domain-containing protein NT01CX_1681 from Clostridium novyi (strain NT).